Here is an 878-residue protein sequence, read N- to C-terminus: Serine/threonine-protein kinase D2 (878 aa).

Over residues 1-12 the composition is skewed to low complexity; that stretch reads MATAPSYPAGLP. A disordered region spans residues 1–35; it reads MATAPSYPAGLPGSPGPGSPPPPGGLELQSPPPLL. Pro residues predominate over residues 14-35; that stretch reads SPGPGSPPPPGGLELQSPPPLL. Serine 30 bears the Phosphoserine mark. Tyrosine 87 is subject to Phosphotyrosine. A Phorbol-ester/DAG-type 1 zinc finger spans residues 138-188; sequence PHALTVHSYRAPAFCDHCGEMLFGLVRQGLKCDGCGLNYHKRCAFSIPNNC. Residues serine 197, serine 198, serine 200, serine 203, serine 206, serine 212, and serine 214 each carry the phosphoserine modification. The disordered stretch occupies residues 224-247; sequence RSTTELLPRRPPSSSSSSSASSYT. Positions 236 to 245 are enriched in low complexity; that stretch reads SSSSSSSASS. Serine 244 carries the post-translational modification Phosphoserine; by CSNK1D and CSNK1E. The Phorbol-ester/DAG-type 2 zinc-finger motif lies at 264 to 314; the sequence is PHTFLIHSYTRPTVCQACKKLLKGLFRQGLQCKDCKFNCHKRCATRVPNDC. Residues 343-373 are disordered; the sequence is ESEDSGVIPGSHSENALHASEEEEGEGGKAQ. One can recognise a PH domain in the interval 397–509; the sequence is TTLREGWVVH…WETAIRQALM (113 aa). Position 407 is a phosphotyrosine (tyrosine 407). Tyrosine 438 is subject to Phosphotyrosine; by ABL1. Serine 518 is subject to Phosphoserine. Residues 551-807 enclose the Protein kinase domain; sequence IFPDEVLGSG…VDKSLSHPWL (257 aa). ATP is bound by residues 557 to 565 and lysine 580; that span reads LGSGQFGVV. Residue aspartate 674 is the Proton acceptor of the active site. A Phosphoserine; by PKC modification is found at serine 706. Serine 710 bears the Phosphoserine mark. Tyrosine 717 is subject to Phosphotyrosine; by ABL1. An Important for ABL1-mediated Tyr-717 phosphorylation motif is present at residues 724–726; it reads LNQ. The disordered stretch occupies residues 844-869; that stretch reads HPLPGSGLPTDRDLGGACPPQDHDMQ. Phosphoserine; by autocatalysis is present on serine 876.

Belongs to the protein kinase superfamily. CAMK Ser/Thr protein kinase family. PKD subfamily. Interacts (via C-terminus) with LCK. Interacts (via N-terminal AP-rich region) with CIB1 isoform 2. Interacts (via N-terminus and zing-finger domain 1 and 2) with PRKCD in response to oxidative stress; the interaction is independent of PRKD2 tyrosine phosphorylation. It depends on Mg(2+) as a cofactor. In terms of processing, phosphorylation of Ser-876 correlates with the activation status of the kinase. Ser-706 or/and Ser-710 are probably phosphorylated by PKC. Phosphorylation at Ser-244 by CSNK1D and CSNK1E promotes nuclear localization and substrate targeting. Phosphorylation at Ser-244, Ser-706 and Ser-710 is required for nuclear localization. Phosphorylated at Tyr-438 by ABL1 in response to oxidative stress. Phosphorylated at Tyr-717 by ABL1 specifically in response to oxidative stress; requires prior phosphorylation at Ser-706 or/and Ser-710. In terms of tissue distribution, widely expressed.

The protein localises to the cytoplasm. The protein resides in the cell membrane. Its subcellular location is the nucleus. It is found in the golgi apparatus. It localises to the trans-Golgi network. The enzyme catalyses L-seryl-[protein] + ATP = O-phospho-L-seryl-[protein] + ADP + H(+). The catalysed reaction is L-threonyl-[protein] + ATP = O-phospho-L-threonyl-[protein] + ADP + H(+). With respect to regulation, activated by DAG and phorbol esters. Phorbol-ester/DAG-type domains bind DAG, mediating translocation to membranes. Autophosphorylation of Ser-710 and phosphorylation of Ser-706 by PKC relieves auto-inhibition by the PH domain. Catalytic activity is further increased by phosphorylation at Tyr-717 in response to oxidative stress. Serine/threonine-protein kinase that converts transient diacylglycerol (DAG) signals into prolonged physiological effects downstream of PKC, and is involved in the regulation of cell proliferation via MAPK1/3 (ERK1/2) signaling, oxidative stress-induced NF-kappa-B activation, inhibition of HDAC7 transcriptional repression, signaling downstream of T-cell antigen receptor (TCR) and cytokine production, and plays a role in Golgi membrane trafficking, angiogenesis, secretory granule release and cell adhesion. May potentiate mitogenesis induced by the neuropeptide bombesin by mediating an increase in the duration of MAPK1/3 (ERK1/2) signaling, which leads to accumulation of immediate-early gene products including FOS that stimulate cell cycle progression. In response to oxidative stress, is phosphorylated at Tyr-438 and Tyr-717 by ABL1, which leads to the activation of PRKD2 without increasing its catalytic activity, and mediates activation of NF-kappa-B. In response to the activation of the gastrin receptor CCKBR, is phosphorylated at Ser-244 by CSNK1D and CSNK1E, translocates to the nucleus, phosphorylates HDAC7, leading to nuclear export of HDAC7 and inhibition of HDAC7 transcriptional repression of NR4A1/NUR77. Upon TCR stimulation, is activated independently of ZAP70, translocates from the cytoplasm to the nucleus and is required for interleukin-2 (IL2) promoter up-regulation. During adaptive immune responses, is required in peripheral T-lymphocytes for the production of the effector cytokines IL2 and IFNG after TCR engagement and for optimal induction of antibody responses to antigens. In epithelial cells stimulated with lysophosphatidic acid (LPA), is activated through a PKC-dependent pathway and mediates LPA-stimulated interleukin-8 (IL8) secretion via a NF-kappa-B-dependent pathway. During TCR-induced T-cell activation, interacts with and is activated by the tyrosine kinase LCK, which results in the activation of the NFAT transcription factors. In the trans-Golgi network (TGN), regulates the fission of transport vesicles that are on their way to the plasma membrane and in polarized cells is involved in the transport of proteins from the TGN to the basolateral membrane. Plays an important role in endothelial cell proliferation and migration prior to angiogenesis, partly through modulation of the expression of KDR/VEGFR2 and FGFR1, two key growth factor receptors involved in angiogenesis. In secretory pathway, is required for the release of chromogranin-A (CHGA)-containing secretory granules from the TGN. Downstream of PRKCA, plays important roles in angiotensin-2-induced monocyte adhesion to endothelial cells. Plays a regulatory role in angiogenesis and tumor growth by phosphorylating a downstream mediator CIB1 isoform 2, resulting in vascular endothelial growth factor A (VEGFA) secretion. The protein is Serine/threonine-protein kinase D2 (PRKD2) of Homo sapiens (Human).